Here is a 342-residue protein sequence, read N- to C-terminus: Ubiquitin fusion degradation protein 1 homolog (342 aa).

Disordered regions lie at residues 245–276 and 318–342; these read FGGAGRRLDGKKKPSSSVSLSDGTGVSTSNAA and EKEASKAGQPSNVFRGGNRTLRGAR. Over residues 259–275 the composition is skewed to polar residues; it reads SSSVSLSDGTGVSTSNA.

This sequence belongs to the UFD1 family. In terms of assembly, forms a complex composed of ubxn-3, ufd-1, npl-4.1 and cdc-48.1; within the complex interacts with cdc-48.1. Interacts with cdc-48.2. Interacts with npl-4.1 and/or npl-4.2.

The protein localises to the cytoplasm. Its subcellular location is the nucleus. Functions at a post-ubiquitination step in the ubiquitin fusion degradation (UFD) pathway. In association with npl-4.1 and/or npl-4.2 and ATPase cdc-48.1 and/or cdc-48.2, involved in the cytoplasmic elimination of misfolded proteins exported from the ER. This pathway, known as ERAD, prevents the activation of the unfolded protein response (UPR) caused by the accumulation of misfolded proteins in the ER. During S phase and in association with npl-4.1 and/or npl-4.2, cdc-48.1 and/or cdc-48.2 and ubxn-3, ensures the degradation of DNA licensing factor cdt-1 after the initiation of DNA replication and thus the disassembly of the DNA replication CMG helicase complex by promoting the dissociation from chromatin of several of its components including cdc-45 and sld-5. Regulates ubxn-3 nuclear localization during S phase. The polypeptide is Ubiquitin fusion degradation protein 1 homolog (ufd-1) (Caenorhabditis elegans).